The sequence spans 203 residues: Octanoyltransferase (203 aa).

A BPL/LPL catalytic domain is found at 32 to 203 (ISTPDEIWLV…LMHKIREIFS (172 aa)). Substrate-binding positions include 71–78 (RGGKITYH), 138–140 (SLG), and 151–153 (GMA). Cysteine 169 (acyl-thioester intermediate) is an active-site residue.

The protein belongs to the LipB family.

The protein resides in the cytoplasm. It catalyses the reaction octanoyl-[ACP] + L-lysyl-[protein] = N(6)-octanoyl-L-lysyl-[protein] + holo-[ACP] + H(+). It participates in protein modification; protein lipoylation via endogenous pathway; protein N(6)-(lipoyl)lysine from octanoyl-[acyl-carrier-protein]: step 1/2. Catalyzes the transfer of endogenously produced octanoic acid from octanoyl-acyl-carrier-protein onto the lipoyl domains of lipoate-dependent enzymes. Lipoyl-ACP can also act as a substrate although octanoyl-ACP is likely to be the physiological substrate. In Buchnera aphidicola subsp. Baizongia pistaciae (strain Bp), this protein is Octanoyltransferase.